We begin with the raw amino-acid sequence, 573 residues long: Developmental and secondary metabolism regulator veA (573 aa).

Over residues 1–11 the composition is skewed to pro residues; the sequence is MATLAAPPPPL. Disordered regions lie at residues 1-24 and 39-63; these read MATL…SRIT and QPKR…DPPP. In terms of domain architecture, Velvet spans 27-230; that stretch reads GKKITYKLNI…AEQGCRVRIR (204 aa). Residues 41-46 carry the Nuclear localization signal motif; it reads KRARAC. 2 positions are modified to phosphothreonine: Thr167 and Thr170. At Ser183 the chain carries Phosphoserine. 3 disordered regions span residues 236–295, 307–367, and 384–573; these read RRRG…RRPS, YQRP…SYQS, and SHIP…ATMR. The segment covering 241–260 has biased composition (basic and acidic residues); the sequence is KRTEDYDYDNERGYNNRRPD. Tyr254 is modified (phosphotyrosine). Pro residues-rich tracts occupy residues 318–339 and 347–361; these read SSTP…PSTP and PAPP…PPLH. The segment covering 387 to 412 has biased composition (low complexity); sequence PQQTTTPTHPYSPRSSISHSRNQSIS. The span at 452–493 shows a compositional bias: polar residues; that stretch reads PSVNSRSKTPSNMITSLPPIQSLSELPSTTSQPSSAIGSSPA. Residues 459–498 are PEST; the sequence is KTPSNMITSLPPIQSLSELPSTTSQPSSAIGSSPANEPGP. Residues 510 to 522 show a composition bias toward basic and acidic residues; it reads RTYEESFGHDDRP.

It belongs to the velvet family. VeA subfamily. Component of the heterotrimeric velvet complex composed of laeA, veA and velB; VeA acting as a bridging protein between laeA and velB. Interacts with the light-sensing phytochrome fphA. Interacts with llmF. In terms of processing, phosphorylated at Thr-167, Thr-170, Ser-183 and Tyr-254. Thr-167 should be phosphorylated and T170 and S183 should be dephosphorylated to achieve light induction of conidiation. Phosphorylation of Ser-183 and Tyr-254 influence sterigmatocystin production in a light-independent manner. Phosphorylation of Thr-167 and Thr-170 modulates expression of veA.

The protein localises to the nucleus. Its subcellular location is the cytoplasm. Its function is as follows. Component of the velvet transcription factor complex that controls sexual/asexual developmental ratio in response to light, promoting sexual development in the darkness while stimulating asexual sporulation under illumination. The velvet complex acts as a global regulator for secondary metabolite gene expression. Controls the expression of the sterigmatocystin and penicillin gene clusters. Represses the cryptic ors gene cluster producing orsellinic acid and its F9775 derivatives in a laeA-independent manner. Required for full induction of faoA gene expression by fructosyl amines. Positively regulates the expression of the early sexual development gene esdC. Controls the expression of mannoprotein mnpA. The sequence is that of Developmental and secondary metabolism regulator veA from Emericella nidulans (strain FGSC A4 / ATCC 38163 / CBS 112.46 / NRRL 194 / M139) (Aspergillus nidulans).